A 91-amino-acid chain; its full sequence is Small ribosomal subunit protein uS15 (91 aa).

Belongs to the universal ribosomal protein uS15 family. In terms of assembly, part of the 30S ribosomal subunit. Forms a bridge to the 50S subunit in the 70S ribosome, contacting the 23S rRNA.

Functionally, one of the primary rRNA binding proteins, it binds directly to 16S rRNA where it helps nucleate assembly of the platform of the 30S subunit by binding and bridging several RNA helices of the 16S rRNA. Forms an intersubunit bridge (bridge B4) with the 23S rRNA of the 50S subunit in the ribosome. In Hydrogenobaculum sp. (strain Y04AAS1), this protein is Small ribosomal subunit protein uS15.